A 177-amino-acid polypeptide reads, in one-letter code: R-phycoerythrin beta chain (177 aa).

Phycourobilin is bound by residues cysteine 50 and cysteine 61. N4-methylasparagine is present on asparagine 72. 2 residues coordinate (2R,3E)-phycoerythrobilin: cysteine 82 and cysteine 158.

Belongs to the phycobiliprotein family. In terms of assembly, heterodimer of an alpha and a beta chain. Post-translationally, contains two covalently linked phycoerythrobilin chromophores and one covalently linked phycourobilin chromophore.

The protein localises to the plastid. Its subcellular location is the chloroplast thylakoid membrane. Functionally, light-harvesting photosynthetic bile pigment-protein from the phycobiliprotein complex. This is R-phycoerythrin beta chain (cpeB) from Lophosiphonia boldii (Red alga).